The following is a 502-amino-acid chain: tRNA-specific adenosine deaminase 1 (502 aa).

The A to I editase domain occupies 63–501; that stretch reads SMGTGTKCIG…IRNPPDYHQF (439 aa). Residue His87 coordinates Zn(2+). Glu89 (proton donor) is an active-site residue. Residues Arg93 and Arg94 each contribute to the 1D-myo-inositol hexakisphosphate site. Cys142 contacts Zn(2+). Residues 174–194 are disordered; that stretch reads SSNLEAPGNERKCEDPDSPVT. A Phosphoserine modification is found at Ser191. Residue Cys299 participates in Zn(2+) binding. Residues Lys302, Arg305, Lys435, and Lys470 each coordinate 1D-myo-inositol hexakisphosphate.

It belongs to the ADAT1 family. It depends on 1D-myo-inositol hexakisphosphate as a cofactor. As to expression, ubiquitously expressed.

It carries out the reaction adenosine(37) in tRNA(Ala) + H2O + H(+) = inosine(37) in tRNA(Ala) + NH4(+). Functionally, specifically deaminates adenosine-37 to inosine in tRNA-Ala. The protein is tRNA-specific adenosine deaminase 1 (ADAT1) of Homo sapiens (Human).